The sequence spans 380 residues: Cytochrome b (380 aa).

4 helical membrane passes run 33 to 53 (FGSL…FLAM), 77 to 98 (WMIR…FLHI), 113 to 133 (WNIG…GYVL), and 178 to 198 (FFTL…LHLL). Positions 83 and 97 each coordinate heme b. Residues His182 and His196 each coordinate heme b. A ubiquinone is bound at residue His201. The next 4 membrane-spanning stretches (helical) occupy residues 226 to 246 (IKDI…TLLS), 288 to 308 (LGGV…PALH), 320 to 340 (LSQF…WIGG), and 347 to 367 (FITI…LLMP).

The protein belongs to the cytochrome b family. The cytochrome bc1 complex contains 11 subunits: 3 respiratory subunits (MT-CYB, CYC1 and UQCRFS1), 2 core proteins (UQCRC1 and UQCRC2) and 6 low-molecular weight proteins (UQCRH/QCR6, UQCRB/QCR7, UQCRQ/QCR8, UQCR10/QCR9, UQCR11/QCR10 and a cleavage product of UQCRFS1). This cytochrome bc1 complex then forms a dimer. Heme b serves as cofactor.

It is found in the mitochondrion inner membrane. In terms of biological role, component of the ubiquinol-cytochrome c reductase complex (complex III or cytochrome b-c1 complex) that is part of the mitochondrial respiratory chain. The b-c1 complex mediates electron transfer from ubiquinol to cytochrome c. Contributes to the generation of a proton gradient across the mitochondrial membrane that is then used for ATP synthesis. The chain is Cytochrome b (MT-CYB) from Pongo abelii (Sumatran orangutan).